The chain runs to 259 residues: Bisphosphoglycerate mutase (259 aa).

Serine 2 carries the N-acetylserine modification. Substrate contacts are provided by residues 10 to 17, 23 to 24, arginine 62, 89 to 92, arginine 100, and 116 to 117; these read RHGEGAWN, CS, ERHY, and RR. The active-site Tele-phosphohistidine intermediate is histidine 11. The active-site Proton donor/acceptor is the glutamate 89. A Phosphothreonine modification is found at threonine 122. 189 to 190 serves as a coordination point for substrate; it reads GN.

It belongs to the phosphoglycerate mutase family. BPG-dependent PGAM subfamily. Homodimer.

The catalysed reaction is (2R)-3-phospho-glyceroyl phosphate = (2R)-2,3-bisphosphoglycerate + H(+). The enzyme catalyses (2R)-2-phosphoglycerate = (2R)-3-phosphoglycerate. At alkaline pH BPGM favors the synthase reaction; however, at lower pH the phosphatase reaction is dominant. Inhibited by citrate. Functionally, plays a major role in regulating hemoglobin oxygen affinity by controlling the levels of its allosteric effector 2,3-bisphosphoglycerate (2,3-BPG). Also exhibits mutase (EC 5.4.2.11) activity. The protein is Bisphosphoglycerate mutase (BPGM) of Macaca fascicularis (Crab-eating macaque).